The primary structure comprises 363 residues: Pituitary-specific positive transcription factor 1 (363 aa).

The 9aaTAD motif lies at 5–13 (AFASSDNFV). A POU-specific domain is found at 195–269 (MDSPEIRELE…ILSKWLEEAE (75 aa)). The segment at residues 285–344 (KRKRRTTISISAKEALERHFGEQSKPSSQEIMRMAEGLNLEKEVVRVWFCNRRQREKRVK) is a DNA-binding region (homeobox).

The protein belongs to the POU transcription factor family. Class-1 subfamily. In terms of tissue distribution, pituitary gland.

The protein localises to the nucleus. In terms of biological role, transcription factor that activates growth hormone and prolactin genes. Specifically binds to the consensus sequence 5'-TAAAT-3'. In Gallus gallus (Chicken), this protein is Pituitary-specific positive transcription factor 1 (POU1F1).